The primary structure comprises 169 residues: Regulator of G-protein signaling rgs-2 (169 aa).

Positions 39 to 158 (GWSQSFENLM…FLASNIYKTV (120 aa)) constitute an RGS domain.

Post-translationally, may be phosphorylated and activated by egl-4. Expressed in a subset of neurons including ventral cord and head- and tail-ganglia neurons. Also expressed in non-neuronal cells including pharyngeal and uterine muscles.

In terms of biological role, weakly inhibits G protein signaling in nervous system, interacting preferentially with the G(O) subfamily member goa-1. In vitro, it acts as a GTPase activator of goa-1. Rgs-1 and rgs-2 redundantly adjust signaling when worms are fed to allow rapid induction of egg-laying behavior. Modulates chemotaxis responses by regulating negatively the sensitivity to quinine in ASH sensory neurons. This Caenorhabditis elegans protein is Regulator of G-protein signaling rgs-2 (rgs-2).